Here is a 74-residue protein sequence, read N- to C-terminus: Sec-independent protein translocase protein TatA (74 aa).

The helical transmembrane segment at 1 to 21 (MGSIGMTELLLIFGIIVLLFG) threads the bilayer.

This sequence belongs to the TatA/E family. As to quaternary structure, forms a complex with TatC.

The protein localises to the cell inner membrane. Part of the twin-arginine translocation (Tat) system that transports large folded proteins containing a characteristic twin-arginine motif in their signal peptide across membranes. TatA could form the protein-conducting channel of the Tat system. The polypeptide is Sec-independent protein translocase protein TatA (Sulfurihydrogenibium sp. (strain YO3AOP1)).